Consider the following 119-residue polypeptide: uncharacterized protein (119 aa).

Residues 1-112 (MVFNMRSTRG…FISSCLLLVL (112 aa)) form the ABC transmembrane type-1 domain. The next 2 helical transmembrane spans lie at 51-73 (VLAWSRAIGEFGATLMLAGATRF) and 91-111 (FEIAIGASLWLLFISSCLLLV).

The protein belongs to the binding-protein-dependent transport system permease family. CysTW subfamily.

The protein resides in the cell membrane. This is an uncharacterized protein from Haemophilus influenzae (strain ATCC 51907 / DSM 11121 / KW20 / Rd).